The following is a 91-amino-acid chain: Small ribosomal subunit protein bS16 (91 aa).

Belongs to the bacterial ribosomal protein bS16 family.

The sequence is that of Small ribosomal subunit protein bS16 from Ligilactobacillus salivarius (strain UCC118) (Lactobacillus salivarius).